We begin with the raw amino-acid sequence, 523 residues long: 2-isopropylmalate synthase (523 aa).

Residues 5–267 enclose the Pyruvate carboxyltransferase domain; it reads VIIFDTTLRD…HTNINHHEIW (263 aa). Residues Asp-14, His-202, His-204, and Asn-238 each coordinate Mn(2+). Positions 392–523 are regulatory domain; sequence RLDYFSVQSG…QNKENNKETV (132 aa).

It belongs to the alpha-IPM synthase/homocitrate synthase family. LeuA type 1 subfamily. In terms of assembly, homodimer. Mn(2+) serves as cofactor.

The protein localises to the cytoplasm. The catalysed reaction is 3-methyl-2-oxobutanoate + acetyl-CoA + H2O = (2S)-2-isopropylmalate + CoA + H(+). Its pathway is amino-acid biosynthesis; L-leucine biosynthesis; L-leucine from 3-methyl-2-oxobutanoate: step 1/4. In terms of biological role, catalyzes the condensation of the acetyl group of acetyl-CoA with 3-methyl-2-oxobutanoate (2-ketoisovalerate) to form 3-carboxy-3-hydroxy-4-methylpentanoate (2-isopropylmalate). In Salmonella typhi, this protein is 2-isopropylmalate synthase.